Consider the following 508-residue polypeptide: Kinesin light chain 3 (508 aa).

The segment at Met1 to Pro20 is disordered. Residues Leu88–Leu150 are a coiled coil. Residues Arg154–Gln197 are disordered. Residues Glu161 to Ser173 are compositionally biased toward basic and acidic residues. Ser173 bears the Phosphoserine mark. TPR repeat units follow at residues Leu207–Ser240, Ala249–Thr282, Ala291–Val324, Ala333–Leu366, and Ala375–Pro408. A disordered region spans residues Ala409–Arg441. Residues Gly420–Ser434 show a composition bias toward polar residues. At Ser467 the chain carries Phosphoserine. The tract at residues Leu486–Arg508 is disordered. A compositionally biased stretch (polar residues) spans Leu498–Arg508. Thr502 is modified (phosphothreonine). Ser506 carries the phosphoserine modification.

This sequence belongs to the kinesin light chain family. In terms of assembly, oligomer composed of two heavy chains and two light chains. Associates with microtubulin in an ATP-dependent manner. Interacts with KIF5C. Interacts with ODF1. Interacts with LRGUK. Interacts with VDAC2. As to expression, expressed in postmeiotic male germ cells (at protein level). Expressed in the testes (at protein level). Expressed in spleen, intestine, brain and ovary.

It is found in the cytoplasm. The protein resides in the cytoskeleton. Its subcellular location is the mitochondrion. Kinesin is a microtubule-associated force-producing protein that may play a role in organelle transport. Plays a role during spermiogenesis in the development of the sperm tail midpiece and in the normal function of spermatozoa. May play a role in the formation of the mitochondrial sheath formation in the developing spermatid midpiece. This is Kinesin light chain 3 (Klc3) from Mus musculus (Mouse).